The primary structure comprises 239 residues: Transcriptional regulatory protein BtsR (239 aa).

The 114-residue stretch at lysine 3–arginine 116 folds into the Response regulatory domain. A 4-aspartylphosphate modification is found at aspartate 54. The HTH LytTR-type domain occupies isoleucine 137–leucine 239.

In terms of processing, phosphorylated by BtsS.

Its function is as follows. Member of the two-component regulatory system BtsS/BtsR. BtsR regulates expression of btsT by binding to its promoter region. The sequence is that of Transcriptional regulatory protein BtsR from Shigella flexneri.